The sequence spans 217 residues: Proteasome subunit beta type-9 (217 aa).

Positions 1–18 (MLEESSEPGWLSEEVKTG) are cleaved as a propeptide — removed in mature form. Thr19 acts as the Nucleophile in catalysis.

Belongs to the peptidase T1B family. The 26S proteasome consists of a 20S proteasome core and two 19S regulatory subunits. The 20S proteasome core is composed of 28 subunits that are arranged in four stacked rings, resulting in a barrel-shaped structure. The two end rings are each formed by seven alpha subunits, and the two central rings are each formed by seven beta subunits. The catalytic chamber with the active sites is on the inside of the barrel. Component of the immunoproteasome, where it displaces the equivalent housekeeping subunit PSMB6. Post-translationally, autocleaved. The resulting N-terminal Thr residue of the mature subunit is responsible for the nucleophile proteolytic activity.

Its subcellular location is the cytoplasm. It localises to the nucleus. It catalyses the reaction Cleavage of peptide bonds with very broad specificity.. The proteasome is a multicatalytic proteinase complex which is characterized by its ability to cleave peptides with Arg, Phe, Tyr, Leu, and Glu adjacent to the leaving group at neutral or slightly basic pH. The proteasome has an ATP-dependent proteolytic activity. This subunit is involved in antigen processing to generate class I binding peptides. This chain is Proteasome subunit beta type-9 (psmb9-a), found in Salmo salar (Atlantic salmon).